The following is a 135-amino-acid chain: Poly [ADP-ribose] polymerase 1 (135 aa).

One can recognise a PARP alpha-helical domain in the interval 1–21 (QAKVEMLDNLLDIEVAYSLLK). The 106-residue stretch at 30-135 (DPIDINYEKL…APVTGYMFGK (106 aa)) folds into the PARP catalytic domain. NAD(+)-binding positions include 104–106 (HGS), Gly-113, and Arg-120. The active site involves Lys-135.

Belongs to the ARTD/PARP family. As to quaternary structure, homodimer; PARP-type zinc-fingers from separate parp1 molecules form a dimer module that specifically recognizes DNA strand breaks. In terms of processing, poly-ADP-ribosylated on serine, glutamate and aspartate residues by autocatalysis. Auto-ADP-ribosylation on serine takes place following interaction with HPF1. Auto poly-ADP-ribosylation on serine residues promotes its dissociation from chromatin.

It localises to the chromosome. It is found in the nucleus. The protein localises to the nucleolus. The protein resides in the cytoplasm. Its subcellular location is the cytosol. The catalysed reaction is NAD(+) + (ADP-D-ribosyl)n-acceptor = nicotinamide + (ADP-D-ribosyl)n+1-acceptor + H(+).. The enzyme catalyses L-seryl-[protein] + NAD(+) = O-(ADP-D-ribosyl)-L-seryl-[protein] + nicotinamide + H(+). It catalyses the reaction L-aspartyl-[protein] + NAD(+) = 4-O-(ADP-D-ribosyl)-L-aspartyl-[protein] + nicotinamide. It carries out the reaction L-glutamyl-[protein] + NAD(+) = 5-O-(ADP-D-ribosyl)-L-glutamyl-[protein] + nicotinamide. The catalysed reaction is L-tyrosyl-[protein] + NAD(+) = O-(ADP-D-ribosyl)-L-tyrosyl-[protein] + nicotinamide + H(+). The enzyme catalyses L-histidyl-[protein] + NAD(+) = N(tele)-(ADP-D-ribosyl)-L-histidyl-[protein] + nicotinamide + H(+). ADP-ribosyltransferase activity is regulated via an allosteric activation mechanism. In absence of activation signal, parp1 is autoinhibited by the PARP alpha-helical domain (also named HD region), which prevents effective NAD(+)-binding. Activity is highly stimulated by signals, such as DNA strand breaks. Binding to damaged DNA unfolds the PARP alpha-helical domain, relieving autoinhibition. Poly-ADP-ribosyltransferase activity is tightly regulated and parp1 is removed from damaged chromatin following initial poly-ADP-ribosylation of chromatin to avoid prolonged residence (trapping) that has cytotoxic consequences. A number of factors or post-translational modifications (auto-poly-ADP-ribosylation) promote parp1 removal from chromatin. In terms of biological role, poly-ADP-ribosyltransferase that mediates poly-ADP-ribosylation of proteins and plays a key role in DNA repair. Mediates glutamate, aspartate, serine, histidine or tyrosine ADP-ribosylation of proteins: the ADP-D-ribosyl group of NAD(+) is transferred to the acceptor carboxyl group of target residues and further ADP-ribosyl groups are transferred to the 2'-position of the terminal adenosine moiety, building up a polymer with an average chain length of 20-30 units. Serine ADP-ribosylation of proteins constitutes the primary form of ADP-ribosylation of proteins in response to DNA damage. Specificity for the different amino acids is conferred by interacting factors, such as hpf1 and nmnat1. Following interaction with hpf1, catalyzes serine ADP-ribosylation of target proteins; hpf1 confers serine specificity by completing the parp1 active site. Also catalyzes tyrosine ADP-ribosylation of target proteins following interaction with hpf1. Following interaction with nmnat1, catalyzes glutamate and aspartate ADP-ribosylation of target proteins; nmnat1 confers glutamate and aspartate specificity. Parp1 initiates the repair of DNA breaks: recognizes and binds DNA breaks within chromatin and recruits hpf1, licensing serine ADP-ribosylation of target proteins, such as histones (H2BS6ADPr and H3S10ADPr), thereby promoting decompaction of chromatin and the recruitment of repair factors leading to the reparation of DNA strand breaks. In addition to base excision repair (BER) pathway, also involved in double-strand breaks (DSBs) repair. Mediates the poly-ADP-ribosylation of a number of proteins. In addition to proteins, also able to ADP-ribosylate DNA: catalyzes ADP-ribosylation of DNA strand break termini containing terminal phosphates and a 2'-OH group in single- and double-stranded DNA, respectively. Parp1-mediated DNA repair in neurons plays a role in sleep: senses DNA damage in neurons and promotes sleep, facilitating efficient DNA repair. In addition to DNA repair, also involved in other processes, such as transcription regulation, programmed cell death, membrane repair, adipogenesis and innate immunity. Acts as a repressor of transcription: binds to nucleosomes and modulates chromatin structure in a manner similar to histone H1, thereby altering RNA polymerase II. Acts both as a positive and negative regulator of transcription elongation, depending on the context. Poly-ADP-ribose chains generated by parp1 also play a role in poly-ADP-ribose-dependent cell death, a process named parthanatos. Also acts as a negative regulator of the cGAS-STING pathway by mediating poly-ADP-ribosylation and inactivation of cgas. Acts as a negative regulator of adipogenesis by catalyzing poly ADP-ribosylation of histone H2B on 'Glu-35' (H2BE35ADPr). The polypeptide is Poly [ADP-ribose] polymerase 1 (parp1) (Oncorhynchus masou (Cherry salmon)).